Here is a 299-residue protein sequence, read N- to C-terminus: Oxygen-dependent coproporphyrinogen-III oxidase (299 aa).

Position 92 (Ser-92) interacts with substrate. Residues His-96 and His-106 each contribute to the a divalent metal cation site. The active-site Proton donor is His-106. 108–110 (NVR) provides a ligand contact to substrate. 2 residues coordinate a divalent metal cation: His-145 and His-175. Residues 240–275 (YVEFNLVWDRGTLFGLQTGGRTESILMSMPPLVRWE) are important for dimerization. 258–260 (GGR) is a substrate binding site.

This sequence belongs to the aerobic coproporphyrinogen-III oxidase family. As to quaternary structure, homodimer. Requires a divalent metal cation as cofactor.

The protein localises to the cytoplasm. The catalysed reaction is coproporphyrinogen III + O2 + 2 H(+) = protoporphyrinogen IX + 2 CO2 + 2 H2O. It functions in the pathway porphyrin-containing compound metabolism; protoporphyrin-IX biosynthesis; protoporphyrinogen-IX from coproporphyrinogen-III (O2 route): step 1/1. Involved in the heme biosynthesis. Catalyzes the aerobic oxidative decarboxylation of propionate groups of rings A and B of coproporphyrinogen-III to yield the vinyl groups in protoporphyrinogen-IX. This Salmonella newport (strain SL254) protein is Oxygen-dependent coproporphyrinogen-III oxidase.